The chain runs to 142 residues: Hemoglobin subunit alpha (142 aa).

The Globin domain occupies 2–142 (VLSPADKTNI…VSTVLTSKYR (141 aa)). Position 4 is a phosphoserine (S4). At K8 the chain carries N6-succinyllysine. At T9 the chain carries Phosphothreonine. K12 is modified (N6-succinyllysine). N6-acetyllysine; alternate is present on K17. N6-succinyllysine; alternate is present on K17. Y25 bears the Phosphotyrosine mark. The residue at position 36 (S36) is a Phosphoserine. K41 carries the N6-succinyllysine modification. A Phosphoserine modification is found at S50. Residue H59 coordinates O2. H88 is a heme b binding site. S103 carries the post-translational modification Phosphoserine. The residue at position 109 (T109) is a Phosphothreonine. Residue S125 is modified to Phosphoserine. 2 positions are modified to phosphothreonine: T135 and T138. Residue S139 is modified to Phosphoserine.

The protein belongs to the globin family. Heterotetramer of two alpha chains and two beta chains. In terms of tissue distribution, red blood cells.

Functionally, involved in oxygen transport from the lung to the various peripheral tissues. Its function is as follows. Hemopressin acts as an antagonist peptide of the cannabinoid receptor CNR1. Hemopressin-binding efficiently blocks cannabinoid receptor CNR1 and subsequent signaling. The protein is Hemoglobin subunit alpha (HBA) of Canis latrans (Coyote).